Here is a 957-residue protein sequence, read N- to C-terminus: Glycine dehydrogenase (decarboxylating) (957 aa).

Lysine 708 carries the N6-(pyridoxal phosphate)lysine modification.

Belongs to the GcvP family. In terms of assembly, the glycine cleavage system is composed of four proteins: P, T, L and H. Pyridoxal 5'-phosphate serves as cofactor.

The enzyme catalyses N(6)-[(R)-lipoyl]-L-lysyl-[glycine-cleavage complex H protein] + glycine + H(+) = N(6)-[(R)-S(8)-aminomethyldihydrolipoyl]-L-lysyl-[glycine-cleavage complex H protein] + CO2. In terms of biological role, the glycine cleavage system catalyzes the degradation of glycine. The P protein binds the alpha-amino group of glycine through its pyridoxal phosphate cofactor; CO(2) is released and the remaining methylamine moiety is then transferred to the lipoamide cofactor of the H protein. The protein is Glycine dehydrogenase (decarboxylating) of Cronobacter sakazakii (strain ATCC BAA-894) (Enterobacter sakazakii).